Consider the following 174-residue polypeptide: CD164 sialomucin-like 2 protein (174 aa).

The first 29 residues, M1–A29, serve as a signal peptide directing secretion. Residues G30 to S141 lie on the Extracellular side of the membrane. N-linked (GlcNAc...) asparagine glycans are attached at residues N71 and N103. The helical transmembrane segment at F142 to F162 threads the bilayer. Residues L163–I174 are Cytoplasmic-facing.

The protein belongs to the CD164 family.

It localises to the membrane. The chain is CD164 sialomucin-like 2 protein (CD164L2) from Homo sapiens (Human).